The chain runs to 752 residues: Double zinc ribbon and ankyrin repeat-containing protein 1 (752 aa).

2 positions are modified to phosphoserine: serine 160 and serine 182. A disordered region spans residues 164–187 (IPAYGGGSGSRPPTRQSQSPGFAH). Residues 174-183 (RPPTRQSQSP) show a composition bias toward polar residues. DZANK-type zinc fingers lie at residues 211 to 270 (CAHC…CVVC) and 339 to 387 (CYRC…GSCG). ANK repeat units follow at residues 605 to 636 (ENRL…DPNC) and 640 to 669 (DNRP…DIDQ).

In terms of assembly, interacts with NINL isoform 2. Associates with DYNC1H1 and multiple dynein intermediate and light chains as well as actin-binding proteins.

It is found in the cytoplasm. It localises to the cytoskeleton. The protein resides in the microtubule organizing center. The protein localises to the centrosome. Its subcellular location is the cilium basal body. Functionally, involved in vesicle transport in photoreceptor cells. The polypeptide is Double zinc ribbon and ankyrin repeat-containing protein 1 (Homo sapiens (Human)).